Here is a 313-residue protein sequence, read N- to C-terminus: Secreted mono- and diacylglycerol lipase MDL5 (313 aa).

The N-terminal stretch at 1-20 (MQLQYVLTLLWIIFAQNVFS) is a signal peptide. Cys66 and Cys306 are disulfide-bonded. Residues Asn72 and Asn111 are each glycosylated (N-linked (GlcNAc...) asparagine). The Nucleophile role is filled by Ser180. The active site involves Asp238. Asn263 carries N-linked (GlcNAc...) asparagine glycosylation. His290 is an active-site residue.

It belongs to the AB hydrolase superfamily. Lipase family. Class 3 subfamily.

It localises to the secreted. The protein localises to the cell wall. It carries out the reaction a monoacylglycerol + H2O = glycerol + a fatty acid + H(+). The catalysed reaction is a diacylglycerol + H2O = a monoacylglycerol + a fatty acid + H(+). Secreted lipase involved in Dandruff and seborrheic dermatitis (D/SD) probably via lipase-mediated breakdown of sebaceous lipids and release of irritating free fatty acids. Shows activity against monoglyceride and diglyceride substrates, but not triglyceride substrates and does not exhibit regio-selective production of diacylglycerols. Cleaves oleic acid from 1,2 isomers of diolein on both the 1 and the 2 position of the glycerol backbone, resulting mainly in free fatty acids but no monoolein is detected. Shows activity on monoolein and liberates mostly free fatty acids, but can also perform the reverse reaction and produce diolein. The polypeptide is Secreted mono- and diacylglycerol lipase MDL5 (Malassezia globosa (strain ATCC MYA-4612 / CBS 7966) (Dandruff-associated fungus)).